Here is a 383-residue protein sequence, read N- to C-terminus: Xylose/arabinose import ATP-binding protein XacJ (383 aa).

The ABC transporter domain occupies isoleucine 4–isoleucine 235. ATP is bound at residue glycine 36 to serine 43.

The protein belongs to the ABC transporter superfamily. Carbohydrate uptake transporter-1 (CUT1) (TC 3.A.1.1) family. The complex is composed of two ATP-binding proteins (XacJ and XacK), two transmembrane proteins (XacH and XacI) and a solute-binding protein (XacG).

The protein resides in the cell membrane. The catalysed reaction is D-xylose(out) + ATP + H2O = D-xylose(in) + ADP + phosphate + H(+). It carries out the reaction L-arabinose(out) + ATP + H2O = L-arabinose(in) + ADP + phosphate + H(+). Functionally, part of the ABC transporter complex XacGHIJK involved in the uptake of xylose and arabinose. Responsible for energy coupling to the transport system. In Haloferax volcanii (strain ATCC 29605 / DSM 3757 / JCM 8879 / NBRC 14742 / NCIMB 2012 / VKM B-1768 / DS2) (Halobacterium volcanii), this protein is Xylose/arabinose import ATP-binding protein XacJ.